Reading from the N-terminus, the 101-residue chain is Large ribosomal subunit protein uL23 (101 aa).

This sequence belongs to the universal ribosomal protein uL23 family. Part of the 50S ribosomal subunit. Contacts protein L29, and trigger factor when it is bound to the ribosome.

Its function is as follows. One of the early assembly proteins it binds 23S rRNA. One of the proteins that surrounds the polypeptide exit tunnel on the outside of the ribosome. Forms the main docking site for trigger factor binding to the ribosome. This Micrococcus luteus (strain ATCC 4698 / DSM 20030 / JCM 1464 / CCM 169 / CCUG 5858 / IAM 1056 / NBRC 3333 / NCIMB 9278 / NCTC 2665 / VKM Ac-2230) (Micrococcus lysodeikticus) protein is Large ribosomal subunit protein uL23.